Consider the following 205-residue polypeptide: Octanoyltransferase (205 aa).

The 176-residue stretch at 30 to 205 (NLSDELVWLL…ILKQEFHKIF (176 aa)) folds into the BPL/LPL catalytic domain. Residues 68 to 75 (RGGKYTYH), 140 to 142 (AFG), and 153 to 155 (GIA) each bind substrate. Residue Cys171 is the Acyl-thioester intermediate of the active site.

It belongs to the LipB family.

It localises to the cytoplasm. The catalysed reaction is octanoyl-[ACP] + L-lysyl-[protein] = N(6)-octanoyl-L-lysyl-[protein] + holo-[ACP] + H(+). The protein operates within protein modification; protein lipoylation via endogenous pathway; protein N(6)-(lipoyl)lysine from octanoyl-[acyl-carrier-protein]: step 1/2. Functionally, catalyzes the transfer of endogenously produced octanoic acid from octanoyl-acyl-carrier-protein onto the lipoyl domains of lipoate-dependent enzymes. Lipoyl-ACP can also act as a substrate although octanoyl-ACP is likely to be the physiological substrate. This is Octanoyltransferase from Wolbachia pipientis subsp. Culex pipiens (strain wPip).